A 174-amino-acid chain; its full sequence is Ribosome maturation factor RimM (174 aa).

Positions 98–171 constitute a PRC barrel domain; sequence EGEFYFHEII…KIEIELMEGL (74 aa).

It belongs to the RimM family. As to quaternary structure, binds ribosomal protein uS19.

Its subcellular location is the cytoplasm. Functionally, an accessory protein needed during the final step in the assembly of 30S ribosomal subunit, possibly for assembly of the head region. Essential for efficient processing of 16S rRNA. May be needed both before and after RbfA during the maturation of 16S rRNA. It has affinity for free ribosomal 30S subunits but not for 70S ribosomes. The polypeptide is Ribosome maturation factor RimM (Bacillus subtilis (strain 168)).